The primary structure comprises 290 residues: 33 kDa chaperonin (290 aa).

2 disulfide bridges follow: Cys-235-Cys-237 and Cys-268-Cys-271.

Belongs to the HSP33 family. Under oxidizing conditions two disulfide bonds are formed involving the reactive cysteines. Under reducing conditions zinc is bound to the reactive cysteines and the protein is inactive.

Its subcellular location is the cytoplasm. Redox regulated molecular chaperone. Protects both thermally unfolding and oxidatively damaged proteins from irreversible aggregation. Plays an important role in the bacterial defense system toward oxidative stress. The chain is 33 kDa chaperonin from Streptococcus pneumoniae (strain P1031).